Reading from the N-terminus, the 130-residue chain is Small ribosomal subunit protein uS8 (130 aa).

Belongs to the universal ribosomal protein uS8 family. As to quaternary structure, part of the 30S ribosomal subunit. Contacts proteins S5 and S12.

Its function is as follows. One of the primary rRNA binding proteins, it binds directly to 16S rRNA central domain where it helps coordinate assembly of the platform of the 30S subunit. The polypeptide is Small ribosomal subunit protein uS8 (Pseudomonas entomophila (strain L48)).